Reading from the N-terminus, the 540-residue chain is uncharacterized protein (540 aa).

The Cytoplasmic segment spans residues 1–61 (MFSIFKKKTS…TNDSPWQDPT (61 aa)). Residues 62-82 (YFSSFGKELMFIATCMLAQLL) form a helical membrane-spanning segment. Over 83–108 (NQAGQTHALCIMNVLSKSFNSEANNQ) the chain is Extracellular. A helical membrane pass occupies residues 109-129 (AWLMASFPLAAGSFILISGRL). Topologically, residues 130–131 (GD) are cytoplasmic. A helical membrane pass occupies residues 132-152 (IYGLKKMLIVGYVIVIVWSII). The Extracellular portion of the chain corresponds to 153–169 (SGLSKYSNSDAFFITSR). A helical transmembrane segment spans residues 170–190 (AFQGVGIAFILPNIMGLVGHV). Residues 191-203 (YKVGSFRKNIVIS) are Cytoplasmic-facing. A helical transmembrane segment spans residues 204–224 (FIGACAPTGGMFGGLFGGLIV). Residues 225-232 (TEDPNQWP) lie on the Extracellular side of the membrane. The helical transmembrane segment at 233–253 (WVFYAFGIATFLSLLMAWYSI) threads the bilayer. Residues 254–272 (PNNVPTNIHGLSMDWTGSA) are Cytoplasmic-facing. A helical membrane pass occupies residues 273-293 (LAIIGLILFNFVWNQAPIVGW). The Extracellular segment spans residues 294–295 (DK). A helical transmembrane segment spans residues 296 to 316 (PYIIVLLIISVIFLVAFFVYE). At 317–334 (SKYAEVPLLPRAMTKNRH) the chain is on the cytoplasmic side. Residues 335-355 (MIMILLAVFLGWGSFGIWTFY) traverse the membrane as a helical segment. At 356-372 (YVSFQLNLRHYSPVWTG) the chain is on the extracellular side. Residues 373–393 (GTYFVFVIFGSMAAFFVAFSI) traverse the membrane as a helical segment. The Cytoplasmic portion of the chain corresponds to 394–398 (KRLGP). The chain crosses the membrane as a helical span at residues 399–419 (ALLLCFSLMAFDAGSIMFSVL). Residues 420–429 (PVEQSYWKLN) are Extracellular-facing. The helical transmembrane segment at 430-450 (FAMQAILCFGMDLSFPASSII) threads the bilayer. Residues 451-461 (LSDGLPMQYQG) lie on the Cytoplasmic side of the membrane. The chain crosses the membrane as a helical span at residues 462-482 (MAGSLVNTVINYSASLCLGMG). Residues 483 to 502 (GTVEHQINKSGNDLLKGYRA) lie on the Extracellular side of the membrane. The helical transmembrane segment at 503–523 (AVYLGVGLASLGVVISVTYML) threads the bilayer. The Cytoplasmic portion of the chain corresponds to 524–540 (ENLWNRHRKSEDRSLEA).

Belongs to the major facilitator superfamily.

The protein localises to the membrane. This is an uncharacterized protein from Saccharomyces cerevisiae (strain ATCC 204508 / S288c) (Baker's yeast).